Consider the following 306-residue polypeptide: Ribonuclease Z (306 aa).

Zn(2+) is bound by residues His-63, His-65, Asp-67, His-68, His-141, Asp-211, and His-269. Catalysis depends on Asp-67, which acts as the Proton acceptor.

The protein belongs to the RNase Z family. In terms of assembly, homodimer. The cofactor is Zn(2+).

The enzyme catalyses Endonucleolytic cleavage of RNA, removing extra 3' nucleotides from tRNA precursor, generating 3' termini of tRNAs. A 3'-hydroxy group is left at the tRNA terminus and a 5'-phosphoryl group is left at the trailer molecule.. Functionally, zinc phosphodiesterase, which displays some tRNA 3'-processing endonuclease activity. Probably involved in tRNA maturation, by removing a 3'-trailer from precursor tRNA. In Staphylococcus aureus (strain USA300), this protein is Ribonuclease Z.